We begin with the raw amino-acid sequence, 46 residues long: Large ribosomal subunit protein bL36 (46 aa).

This sequence belongs to the bacterial ribosomal protein bL36 family.

The chain is Large ribosomal subunit protein bL36 from Escherichia coli O7:K1 (strain IAI39 / ExPEC).